The chain runs to 230 residues: 3-beta-hydroxysteroid-Delta(8),Delta(7)-isomerase (230 aa).

At Thr-2 the chain carries N-acetylthreonine. A run of 4 helical transmembrane segments spans residues Trp-29 to Leu-49, Leu-66 to Tyr-86, Met-121 to Leu-141, and Phe-185 to Phe-205. An EXPERA domain is found at Gly-61–Val-204.

Belongs to the EBP family. As to expression, expressed in liver.

It is found in the endoplasmic reticulum membrane. It localises to the nucleus envelope. The protein localises to the cytoplasmic vesicle. The enzyme catalyses lathosterol = 5alpha-cholest-8-en-3beta-ol. It catalyses the reaction zymosterol = 5alpha-cholesta-7,24-dien-3beta-ol. It carries out the reaction 5,6alpha-epoxy-5alpha-cholestan-3beta-ol + H2O = 5alpha-cholestane-3beta,5,6beta-triol. The catalysed reaction is 5,6beta-epoxy-5beta-cholestan-3beta-ol + H2O = 5alpha-cholestane-3beta,5,6beta-triol. It functions in the pathway steroid biosynthesis; cholesterol biosynthesis. Enzymatic activity is induced by 25-hydroxycholesterol, cholestyramine and lovastatin. In terms of biological role, isomerase that catalyzes the conversion of Delta(8)-sterols to their corresponding Delta(7)-isomers. Component of the microsomal antiestrogen binding site (AEBS), a multiproteic complex at the ER membrane that consists of an association between EBP and 7-dehydrocholesterol reductase/DHCR7. This complex is responsible for cholesterol-5,6-epoxide hydrolase (ChEH) activity, which consists in the hydration of cholesterol-5,6-epoxides (5,6-EC) into cholestane-3beta,5alpha,6beta-triol (CT). The precise role of each component of this complex has not been described yet. In Rattus norvegicus (Rat), this protein is 3-beta-hydroxysteroid-Delta(8),Delta(7)-isomerase.